The sequence spans 116 residues: Host transcription reprogramming factor 4 (116 aa).

An N-terminal signal peptide occupies residues 1-24; sequence MHIIHISKFMALLAISTIAIPTRG. The tract at residues 24–53 is disordered; that stretch reads GRSEVDSRDVNQAQTVTSGSSIAPSGSEKR. The segment covering 33 to 47 has biased composition (polar residues); sequence VNQAQTVTSGSSIAP. The C2H2-type; degenerate zinc-finger motif lies at 74–96; the sequence is FQCPHCKDGISNRVALYTHVKAF.

The protein resides in the secreted. It is found in the host nucleus. Functionally, probable secreted effector that translocates into the nuclei of host cells to reprogram the expression of targeted genes by binding on effector binding elements in rice. The protein is Host transcription reprogramming factor 4 of Pyricularia oryzae (strain 70-15 / ATCC MYA-4617 / FGSC 8958) (Rice blast fungus).